Consider the following 240-residue polypeptide: UDP-2,3-diacylglucosamine hydrolase (240 aa).

The Mn(2+) site is built by Asp8, His10, Asp41, Asn79, and His114. 79-80 (NR) contacts substrate. 5 residues coordinate substrate: Asp122, Ser160, Asn164, Lys167, and His195. Mn(2+)-binding residues include His195 and His197.

Belongs to the LpxH family. The cofactor is Mn(2+).

The protein localises to the cell inner membrane. The catalysed reaction is UDP-2-N,3-O-bis[(3R)-3-hydroxytetradecanoyl]-alpha-D-glucosamine + H2O = 2-N,3-O-bis[(3R)-3-hydroxytetradecanoyl]-alpha-D-glucosaminyl 1-phosphate + UMP + 2 H(+). It participates in glycolipid biosynthesis; lipid IV(A) biosynthesis; lipid IV(A) from (3R)-3-hydroxytetradecanoyl-[acyl-carrier-protein] and UDP-N-acetyl-alpha-D-glucosamine: step 4/6. Hydrolyzes the pyrophosphate bond of UDP-2,3-diacylglucosamine to yield 2,3-diacylglucosamine 1-phosphate (lipid X) and UMP by catalyzing the attack of water at the alpha-P atom. Involved in the biosynthesis of lipid A, a phosphorylated glycolipid that anchors the lipopolysaccharide to the outer membrane of the cell. The chain is UDP-2,3-diacylglucosamine hydrolase from Escherichia coli O127:H6 (strain E2348/69 / EPEC).